The chain runs to 266 residues: Enterotoxin type C-2 (266 aa).

Positions 1–27 (MNKSRFISCVILIFALILVLFTPNVLA) are cleaved as a signal peptide. D36, H74, E98, E107, and D110 together coordinate Zn(2+). A disulfide bridge links C120 with C137. 3 residues coordinate Zn(2+): H145, E146, and H149.

This sequence belongs to the staphylococcal/streptococcal toxin family. Interacts with host MHC class II molecules composed of alpha/HLA-DRA and beta/HLA-DRB1 chains. It depends on Zn(2+) as a cofactor.

It localises to the secreted. Staphylococcal enterotoxin that activates the host immune system by binding as unprocessed molecules to major histocompatibility (MHC) complex class II and T-cell receptor (TCR) molecules. In turn, this ternary complex activates a large number of T-lymphocytes initiating a systemic release of pro-inflammatory cytokines. Also causes the intoxication staphylococcal food poisoning syndrome. The protein is Enterotoxin type C-2 (entC2) of Staphylococcus aureus.